The primary structure comprises 402 residues: Probable tRNA pseudouridine synthase D (402 aa).

Asp94 functions as the Nucleophile in the catalytic mechanism. Positions 175 to 364 (YILNYYGTQR…PGTRRKLITK (190 aa)) constitute a TRUD domain.

Belongs to the pseudouridine synthase TruD family.

It carries out the reaction uridine(13) in tRNA = pseudouridine(13) in tRNA. Could be responsible for synthesis of pseudouridine from uracil-13 in transfer RNAs. The protein is Probable tRNA pseudouridine synthase D of Methanococcus aeolicus (strain ATCC BAA-1280 / DSM 17508 / OCM 812 / Nankai-3).